A 387-amino-acid chain; its full sequence is MKFLDEAKIYLKSGDGGGGCISFRREKYIPFGGPDGGDGGRGGDVIFQADGHLNTLIDFRYKQHFKAKRGTHGMGSQCTGASAEALIIKVPVGTIIRDDADGTILVDMVEDGQQFLACKGGDGGRGNMHFKSSTNQAPRRADPGFPGEEMWVRLEMKLLADVGLVGMPNAGKSTLISKVSAAKPKIADYPFTTLQPNLGVVRVEMDHSFVMADIPGLIKGAHEGHGLGMFFLKHIERCAVLLHLVEIDSLEDDDPVSRFQTIEAELAGYSEQLAQKPRILVLSKADLLGEEDRQVVLSWFKERLGEAMPPVFILSSATGEGIEALVYHVGGMVKQWRLKQGKVGHALEDAPTRAGSKALRDEHAPSWQDDDDDDDDDDGVEVIWVRE.

One can recognise an Obg domain in the interval 1 to 159 (MKFLDEAKIY…MWVRLEMKLL (159 aa)). Residues 160–334 (ADVGLVGMPN…LVYHVGGMVK (175 aa)) enclose the OBG-type G domain. GTP-binding positions include 166–173 (GMPNAGKS), 191–195 (FTTLQ), 213–216 (DIPG), 283–286 (SKAD), and 315–317 (SSA). Mg(2+) contacts are provided by serine 173 and threonine 193. The tract at residues 347–379 (LEDAPTRAGSKALRDEHAPSWQDDDDDDDDDDG) is disordered. Residues 368–379 (QDDDDDDDDDDG) are compositionally biased toward acidic residues.

The protein belongs to the TRAFAC class OBG-HflX-like GTPase superfamily. OBG GTPase family. In terms of assembly, monomer. The cofactor is Mg(2+).

The protein localises to the cytoplasm. Functionally, an essential GTPase which binds GTP, GDP and possibly (p)ppGpp with moderate affinity, with high nucleotide exchange rates and a fairly low GTP hydrolysis rate. Plays a role in control of the cell cycle, stress response, ribosome biogenesis and in those bacteria that undergo differentiation, in morphogenesis control. This chain is GTPase Obg, found in Magnetococcus marinus (strain ATCC BAA-1437 / JCM 17883 / MC-1).